The sequence spans 103 residues: Small ribosomal subunit protein uS10 (103 aa).

Belongs to the universal ribosomal protein uS10 family. Part of the 30S ribosomal subunit.

Functionally, involved in the binding of tRNA to the ribosomes. This Hydrogenovibrio crunogenus (strain DSM 25203 / XCL-2) (Thiomicrospira crunogena) protein is Small ribosomal subunit protein uS10.